Reading from the N-terminus, the 167-residue chain is uncharacterized protein (167 aa).

The N-terminal stretch at 1-25 (MPFSVTKFSLIFVALLLAEALVAQS) is a signal peptide.

This is an uncharacterized protein from Caenorhabditis elegans.